The sequence spans 512 residues: Respiratory nitrate reductase 1 beta chain (512 aa).

4Fe-4S ferredoxin-type domains are found at residues 7-35 (VGMV…SREG), 175-206 (TFMM…KREE), and 208-237 (GIVL…FNWK). Residues cysteine 16, cysteine 19, cysteine 22, cysteine 26, cysteine 184, cysteine 187, and cysteine 192 each coordinate [4Fe-4S] cluster. Residues cysteine 196, cysteine 217, and cysteine 223 each contribute to the [3Fe-4S] cluster site. [4Fe-4S] cluster contacts are provided by cysteine 227, cysteine 244, cysteine 247, cysteine 259, and cysteine 263.

In terms of assembly, dimer of heterotrimers each composed of an alpha, a beta and a gamma chain. Alpha and beta are catalytic chains; gamma chains are involved in binding the enzyme complex to the cytoplasmic membrane. It depends on [4Fe-4S] cluster as a cofactor. [3Fe-4S] cluster serves as cofactor.

It localises to the cell membrane. It carries out the reaction nitrate + a quinol = a quinone + nitrite + H2O. In terms of biological role, the nitrate reductase enzyme complex allows S.flexneri to use nitrate as an electron acceptor during anaerobic growth. The beta chain is an electron transfer unit containing four cysteine clusters involved in the formation of iron-sulfur centers. Electrons are transferred from the gamma chain to the molybdenum cofactor of the alpha subunit. The chain is Respiratory nitrate reductase 1 beta chain (narH) from Shigella flexneri.